The sequence spans 303 residues: NAD kinase (303 aa).

Aspartate 85 serves as the catalytic Proton acceptor. NAD(+) contacts are provided by residues 85–86, arginine 90, 159–160, lysine 187, aspartate 189, alanine 224, and glutamine 259; these read DG and ND.

The protein belongs to the NAD kinase family. The cofactor is a divalent metal cation.

It is found in the cytoplasm. The enzyme catalyses NAD(+) + ATP = ADP + NADP(+) + H(+). In terms of biological role, involved in the regulation of the intracellular balance of NAD and NADP, and is a key enzyme in the biosynthesis of NADP. Catalyzes specifically the phosphorylation on 2'-hydroxyl of the adenosine moiety of NAD to yield NADP. The polypeptide is NAD kinase (Bdellovibrio bacteriovorus (strain ATCC 15356 / DSM 50701 / NCIMB 9529 / HD100)).